Consider the following 37-residue polypeptide: Cytochrome b6-f complex subunit 5 (37 aa).

The helical transmembrane segment at 5-25 (LLCGIVLGLIPVTLLGLFVAA) threads the bilayer.

The protein belongs to the PetG family. As to quaternary structure, the 4 large subunits of the cytochrome b6-f complex are cytochrome b6, subunit IV (17 kDa polypeptide, PetD), cytochrome f and the Rieske protein, while the 4 small subunits are PetG, PetL, PetM and PetN. The complex functions as a dimer.

The protein resides in the cellular thylakoid membrane. Component of the cytochrome b6-f complex, which mediates electron transfer between photosystem II (PSII) and photosystem I (PSI), cyclic electron flow around PSI, and state transitions. PetG is required for either the stability or assembly of the cytochrome b6-f complex. The chain is Cytochrome b6-f complex subunit 5 from Synechococcus sp. (strain WH7803).